The primary structure comprises 556 residues: Undecaprenyl phosphate-alpha-4-amino-4-deoxy-L-arabinose arabinosyl transferase (556 aa).

The next 10 membrane-spanning stretches (helical) occupy residues 88–108 (FASV…AMML), 116–136 (LLAA…TYSV), 179–199 (FMTK…PVAL), 207–227 (LLLF…PWAL), 258–278 (APFW…LALL), 296–316 (FFLL…KGKL), 319–339 (YILP…SGLA), 355–375 (IVFG…IIVP), 384–404 (LTII…AVSL), and 410–430 (WGYL…GSIP).

This sequence belongs to the glycosyltransferase 83 family.

It is found in the cell inner membrane. The catalysed reaction is 4-amino-4-deoxy-alpha-L-arabinopyranosyl di-trans,octa-cis-undecaprenyl phosphate + lipid IVA = lipid IIA + di-trans,octa-cis-undecaprenyl phosphate.. It participates in lipopolysaccharide metabolism; 4-amino-4-deoxy-beta-L-arabinose-lipid A biosynthesis. Its function is as follows. Catalyzes the transfer of the L-Ara4N moiety of the glycolipid undecaprenyl phosphate-alpha-L-Ara4N to lipid A. The modified arabinose is attached to lipid A and is required for resistance to polymyxin and cationic antimicrobial peptides. This Pectobacterium atrosepticum (strain SCRI 1043 / ATCC BAA-672) (Erwinia carotovora subsp. atroseptica) protein is Undecaprenyl phosphate-alpha-4-amino-4-deoxy-L-arabinose arabinosyl transferase.